A 274-amino-acid chain; its full sequence is Undecaprenyl-diphosphatase 1 (274 aa).

The next 8 membrane-spanning stretches (helical) occupy residues 7 to 27, 48 to 68, 88 to 108, 115 to 135, 151 to 171, 189 to 209, 221 to 241, and 253 to 273; these read LEIF…WLPV, FIST…LVIF, VRLW…GILF, LFFN…IMIG, VTYK…IPGT, YVAA…ASAL, FEWL…IVVI, and FKVF…YFFL.

It belongs to the UppP family.

Its subcellular location is the cell membrane. The enzyme catalyses di-trans,octa-cis-undecaprenyl diphosphate + H2O = di-trans,octa-cis-undecaprenyl phosphate + phosphate + H(+). In terms of biological role, catalyzes the dephosphorylation of undecaprenyl diphosphate (UPP). Confers resistance to bacitracin. This Clostridioides difficile (strain 630) (Peptoclostridium difficile) protein is Undecaprenyl-diphosphatase 1.